We begin with the raw amino-acid sequence, 296 residues long: Ribonuclease HIII (296 aa).

An RNase H type-2 domain is found at 80-296 (LALIGSDEVG…NTKKAYQRLK (217 aa)). 3 residues coordinate a divalent metal cation: Asp-86, Glu-87, and Asp-191.

The protein belongs to the RNase HII family. RnhC subfamily. Mn(2+) is required as a cofactor. The cofactor is Mg(2+).

The protein resides in the cytoplasm. It carries out the reaction Endonucleolytic cleavage to 5'-phosphomonoester.. In terms of biological role, endonuclease that specifically degrades the RNA of RNA-DNA hybrids. The protein is Ribonuclease HIII of Streptococcus thermophilus (strain ATCC BAA-250 / LMG 18311).